The sequence spans 149 residues: Arginine regulator (149 aa).

Belongs to the ArgR family.

Its subcellular location is the cytoplasm. The protein operates within amino-acid degradation; L-arginine degradation via ADI pathway. Regulates the transcription of the arc operon, involved in arginine catabolism. The polypeptide is Arginine regulator (argR1) (Bacillus cereus (strain ATCC 10987 / NRS 248)).